The following is a 180-amino-acid chain: Protein SPMIP9 (180 aa).

Microtubule inner protein component of sperm flagellar doublet microtubules.

The protein resides in the nucleus. It localises to the cytoplasm. The protein localises to the cytoskeleton. It is found in the flagellum axoneme. In terms of biological role, microtubule inner protein (MIP) part of the dynein-decorated doublet microtubules (DMTs) in flagella axoneme. This chain is Protein SPMIP9 (SPMIP9), found in Bos taurus (Bovine).